The chain runs to 156 residues: ATP synthase subunit b 1 (156 aa).

The chain crosses the membrane as a helical span at residues 7-29 (LLGQAISFALFVWFCMKYVWPPL).

It belongs to the ATPase B chain family. In terms of assembly, F-type ATPases have 2 components, F(1) - the catalytic core - and F(0) - the membrane proton channel. F(1) has five subunits: alpha(3), beta(3), gamma(1), delta(1), epsilon(1). F(0) has three main subunits: a(1), b(2) and c(10-14). The alpha and beta chains form an alternating ring which encloses part of the gamma chain. F(1) is attached to F(0) by a central stalk formed by the gamma and epsilon chains, while a peripheral stalk is formed by the delta and b chains.

It localises to the cell inner membrane. Its function is as follows. F(1)F(0) ATP synthase produces ATP from ADP in the presence of a proton or sodium gradient. F-type ATPases consist of two structural domains, F(1) containing the extramembraneous catalytic core and F(0) containing the membrane proton channel, linked together by a central stalk and a peripheral stalk. During catalysis, ATP synthesis in the catalytic domain of F(1) is coupled via a rotary mechanism of the central stalk subunits to proton translocation. Component of the F(0) channel, it forms part of the peripheral stalk, linking F(1) to F(0). The chain is ATP synthase subunit b 1 from Vibrio campbellii (strain ATCC BAA-1116).